The following is a 761-amino-acid chain: ARF GTPase-activating protein GIT1 (761 aa).

Positions 1–124 (MSRKGPRAEV…AFVHKLPCRD (124 aa)) constitute an Arf-GAP domain. An interaction with gamma-tubulin and localization to the centrosome region spans residues 1 to 124 (MSRKGPRAEV…AFVHKLPCRD (124 aa)). Residues 11-34 (CADCSAPDPGWASISRGVLVCDEC) form a C4-type zinc finger. 3 ANK repeats span residues 132–161 (DLSKQLHSSVRTGNLETCLRLLSLGAQANF), 166–195 (KGTTPLHVAAKAGQTLQAELLVVYGADPGS), and 199–228 (NGRTPIDYARQAGHHELAERLVECQYELTD). Phosphotyrosine is present on Y224. Positions 245 to 365 (HYIIPQMADS…QGKSLSSPTD (121 aa)) are interaction with PCLO. An interaction with PTK2/FAK1 region spans residues 253–415 (DSLDLSELAK…NRARSMDSSD (163 aa)). Residues 254-367 (SLDLSELAKA…KSLSSPTDNL (114 aa)) form an interaction with ARHGEF7 region. The tract at residues 354–416 (RQQGKSLSSP…RARSMDSSDL (63 aa)) is disordered. Positions 357–374 (GKSLSSPTDNLELSLRSQ) are enriched in polar residues. Phosphoserine occurs at positions 359 and 362. Phosphothreonine is present on T364. The interaction with NCK2 and GRIN3A stretch occupies residues 366–587 (NLELSLRSQS…QEGSRHTSKL (222 aa)). The required for localization at synapses stretch occupies residues 366-587 (NLELSLRSQS…QEGSRHTSKL (222 aa)). Residues S370 and S375 each carry the phosphoserine modification. Y383 bears the Phosphotyrosine mark. Residues S385 and S388 each carry the phosphoserine modification. Positions 385-394 (SVASDEDTDQ) are enriched in acidic residues. T392 carries the post-translational modification Phosphothreonine. Residues S410, S413, and S417 each carry the phosphoserine modification. The interaction with MAPK1 stretch occupies residues 411 to 466 (MDSSDLSDGAVTLQEYLELKKALATSEAKVQQLMKVNSSLSDELRRLQREIHKLQA). The segment at 420 to 620 (AVTLQEYLEL…EGKRFLELGK (201 aa)) is interaction with IKBKG. Residues 440–474 (VQQLMKVNSSLSDELRRLQREIHKLQAENLQLRQP) adopt a coiled-coil conformation. The tract at residues 471-501 (LRQPPGPVPTPPLPSERAEHTPMAPGGSTHR) is disordered. A compositionally biased stretch (pro residues) spans 474 to 484 (PPGPVPTPPLP). Residue T480 is modified to Phosphothreonine. 2 positions are modified to phosphoserine: S498 and S536. T537 carries the phosphothreonine modification. A phosphotyrosine mark is found at Y545 and Y554. Phosphoserine is present on residues S561, S571, S592, and S596. A disordered region spans residues 572-606 (PLLSCSQEGSRHTSKLSRHGSGADSDYENTQSGDP). Residue T601 is modified to Phosphothreonine. At S630 the chain carries Phosphoserine. Positions 637–761 (PGLPSTEDVI…VTITTREKKQ (125 aa)) are interaction with PXN and TGFB1I1.

As to quaternary structure, forms homodimers and possibly oligomers. May forms heterooligomers with GIT2. Interacts with G protein-coupled receptor kinases, including GRK2, GRK3, GRK5 and GRK6. Interacts with PPFIA1, PPFIA2 and PPFIA4. Interacts with GRIP1 and forms a ternary complex with PPFIA1 and GRIP1. Directly interacts with ARHGEF7/beta-PIX, forming in vitro a heptameric complex made of a GIT1 dimer and an ARHGEF7 trimer. Directly interacts with PXN/paxillin; this interaction is enhanced in the presence of ARHGEF7. Directly interacts (via C-terminus) with TGFB1I1/Hic-5 (via LD motif 3). Directly interacts with PTK2/FAK1. May interact with PTK2B/PYK2; this interaction may be indirect. Interacts with AMPA receptors GRIA2/3. Directly interacts with protein Piccolo/PCLO. Forms a complex with Ephrin-B1/EFNB1 and NCK2/GRB4 (via SH2); this interaction is important for spine morphogenesis and synapse formation. Interaction with NCK2 is transient and depends upon GIT1 phosphorylation at Tyr-383. Interacts with GRIN3A/GluN3A (via C-terminus); this interaction competes with GIT1 interaction with ARHGEF7 and limits synaptic localization of GIT1. Interacts with IKBKG/NEMO in resting bone mesenchymal stem cells, as well as in TNF-stimulated cells; this interaction may increase IKBKG affinity for 'Lys-63'-linked polyubiquitin chains. Interacts with GABA(A) receptors, including GABRB3 and GABRG2. Interacts with SCRIB. Interacts (via N- and C-terminus) with ENTR1/SDCCAG3 (via N-terminus); this interaction is direct. May form a tripartite complex with ENTR1 and PTPN13. Interacts with YWHAZ. Interacts with PAK1. Interacts with PAK3. Directly interacts (via N-terminus) with gamma-tubulin. Interacts with MAPK1 and MAPK3; this interaction is required for MAPK1/3 recruitment to focal adhesions. In terms of processing, phosphorylated by PAK1. Phosphorylation on tyrosine residues may be catalyzed by PTK2/FAK1 and SRC in growing fibroblasts. Phosphorylation at Tyr-383 is induced by activation of Ephrin-B1/EFNB1 and catalyzed by SRC family kinases. It is required for the interaction with NCK2 and for GIT1 recruitment to synapses in hippocampal neurons.

Its subcellular location is the cytoplasm. It is found in the synapse. It localises to the presynapse. The protein localises to the postsynapse. The protein resides in the postsynaptic density. Its subcellular location is the cell junction. It is found in the focal adhesion. It localises to the cell projection. The protein localises to the lamellipodium. The protein resides in the cytoskeleton. Its subcellular location is the microtubule organizing center. It is found in the centrosome. It localises to the spindle pole. GTPase-activating protein for ADP ribosylation factor family members, including ARF1. Multidomain scaffold protein that interacts with numerous proteins and therefore participates in many cellular functions, including receptor internalization, focal adhesion remodeling, and signaling by both G protein-coupled receptors and tyrosine kinase receptors. Through PAK1 activation, positively regulates microtubule nucleation during interphase. Plays a role in the regulation of cytokinesis; for this function, may act in a pathway also involving ENTR1 and PTPN13. May promote cell motility both by regulating focal complex dynamics and by local activation of RAC1. May act as scaffold for MAPK1/3 signal transduction in focal adhesions. Recruits MAPK1/3/ERK1/2 to focal adhesions after EGF stimulation via a Src-dependent pathway, hence stimulating cell migration. Plays a role in brain development and function. Involved in the regulation of spine density and synaptic plasticity that is required for processes involved in learning. Plays an important role in dendritic spine morphogenesis and synapse formation. In hippocampal neurons, recruits guanine nucleotide exchange factors (GEFs), such as ARHGEF7/beta-PIX, to the synaptic membrane. These in turn locally activate RAC1, which is an essential step for spine morphogenesis and synapse formation. May contribute to the organization of presynaptic active zones through oligomerization and formation of a Piccolo/PCLO-based protein network, which includes ARHGEF7/beta-PIX and FAK1. In neurons, through its interaction with liprin-alpha family members, may be required for AMPA receptor (GRIA2/3) proper targeting to the cell membrane. In complex with GABA(A) receptors and ARHGEF7, plays a crucial role in regulating GABA(A) receptor synaptic stability, maintaining GPHN/gephyrin scaffolds and hence GABAergic inhibitory synaptic transmission, by locally coordinating RAC1 and PAK1 downstream effector activity, leading to F-actin stabilization. May also be important for RAC1 downstream signaling pathway through PAK3 and regulation of neuronal inhibitory transmission at presynaptic input. Required for successful bone regeneration during fracture healing. The function in intramembranous ossification may, at least partly, exerted by macrophages in which GIT1 is a key negative regulator of redox homeostasis, IL1B production, and glycolysis, acting through the ERK1/2/NRF2/NFE2L2 axis. May play a role in angiogenesis during fracture healing. In this process, may regulate activation of the canonical NF-kappa-B signal in bone mesenchymal stem cells by enhancing the interaction between NEMO and 'Lys-63'-ubiquitinated RIPK1/RIP1, eventually leading to enhanced production of VEGFA and others angiogenic factors. Essential for VEGF signaling through the activation of phospholipase C-gamma and ERK1/2, hence may control endothelial cell proliferation and angiogenesis. This Homo sapiens (Human) protein is ARF GTPase-activating protein GIT1 (GIT1).